A 409-amino-acid polypeptide reads, in one-letter code: Argininosuccinate synthase (409 aa).

Residues 8–16 (AYSGGLDTS) and A34 contribute to the ATP site. Y85 serves as a coordination point for L-citrulline. G115 is a binding site for ATP. L-aspartate is bound by residues T117, N121, and D122. N121 contacts L-citrulline. L-citrulline is bound by residues R125, S178, S187, E268, and Y280.

Belongs to the argininosuccinate synthase family. Type 1 subfamily. As to quaternary structure, homotetramer.

The protein resides in the cytoplasm. The catalysed reaction is L-citrulline + L-aspartate + ATP = 2-(N(omega)-L-arginino)succinate + AMP + diphosphate + H(+). It functions in the pathway amino-acid biosynthesis; L-arginine biosynthesis; L-arginine from L-ornithine and carbamoyl phosphate: step 2/3. The chain is Argininosuccinate synthase from Thermotoga petrophila (strain ATCC BAA-488 / DSM 13995 / JCM 10881 / RKU-1).